Here is a 556-residue protein sequence, read N- to C-terminus: 2-succinyl-5-enolpyruvyl-6-hydroxy-3-cyclohexene-1-carboxylate synthase (556 aa).

This sequence belongs to the TPP enzyme family. MenD subfamily. As to quaternary structure, homodimer. The cofactor is Mg(2+). It depends on Mn(2+) as a cofactor. Thiamine diphosphate serves as cofactor.

It catalyses the reaction isochorismate + 2-oxoglutarate + H(+) = 5-enolpyruvoyl-6-hydroxy-2-succinyl-cyclohex-3-ene-1-carboxylate + CO2. Its pathway is quinol/quinone metabolism; 1,4-dihydroxy-2-naphthoate biosynthesis; 1,4-dihydroxy-2-naphthoate from chorismate: step 2/7. The protein operates within quinol/quinone metabolism; menaquinone biosynthesis. Functionally, catalyzes the thiamine diphosphate-dependent decarboxylation of 2-oxoglutarate and the subsequent addition of the resulting succinic semialdehyde-thiamine pyrophosphate anion to isochorismate to yield 2-succinyl-5-enolpyruvyl-6-hydroxy-3-cyclohexene-1-carboxylate (SEPHCHC). In Shigella boydii serotype 4 (strain Sb227), this protein is 2-succinyl-5-enolpyruvyl-6-hydroxy-3-cyclohexene-1-carboxylate synthase.